Here is a 410-residue protein sequence, read N- to C-terminus: MGLKHFLEKIEPHFLPGGKHEKWYALYEAAATIFYTSGAVTRKAAHVRDALDSKRMMILVWLALFPAMFYGMYNVGAQAFGALTPDLLQQSIANDWHYALANALGINMSSEAGVLGKMLFGAIYFLPIYATVFIVGGFWEVLFATVRKHEINEGFFVTSILFALIVPPTLPLWQAALGISFGVVVAKEVFGGTGKNFMNPALAGRAFLFFAYPANLSGDAVWTAVDGYSGATALAQWAAHGADGLKNAITGQTITWMDAFIGKLPGSIGEVSTLALLIGGAFIVFARIASWRIIAGVMIGMIAMSSLFNFIGSDTNAMFAMPWYWHLVVGGFAIGMLFMATDPVSASFTNVGKWWYGALIGVMCVLIRVVNPAYPEGMMLAILFANLFAPIFDYFVAQANIKRRKARSNG.

The next 3 helical transmembrane spans lie at 56–76, 119–139, and 159–179; these read MMIL…YNVG, LFGA…GGFW, and SILF…ALGI. FMN phosphoryl threonine is present on Thr232. 5 helical membrane passes run 266-286, 293-313, 318-338, 347-367, and 377-397; these read GSIG…IVFA, IIAG…FIGS, MFAM…GMLF, SFTN…CVLI, and GMML…YFVA.

The protein belongs to the NqrB/RnfD family. In terms of assembly, composed of six subunits; NqrA, NqrB, NqrC, NqrD, NqrE and NqrF. The cofactor is FMN.

Its subcellular location is the cell inner membrane. It carries out the reaction a ubiquinone + n Na(+)(in) + NADH + H(+) = a ubiquinol + n Na(+)(out) + NAD(+). Functionally, NQR complex catalyzes the reduction of ubiquinone-1 to ubiquinol by two successive reactions, coupled with the transport of Na(+) ions from the cytoplasm to the periplasm. NqrA to NqrE are probably involved in the second step, the conversion of ubisemiquinone to ubiquinol. This Neisseria meningitidis serogroup A / serotype 4A (strain DSM 15465 / Z2491) protein is Na(+)-translocating NADH-quinone reductase subunit B.